Here is a 506-residue protein sequence, read N- to C-terminus: Nucleoside import ATP-binding protein NupA (506 aa).

2 ABC transporter domains span residues 7–242 (IQMI…VGRS) and 259–503 (LEIK…VGGN). 39-46 (GENGAGKS) lines the ATP pocket.

This sequence belongs to the ABC transporter superfamily. In terms of assembly, the complex is composed of two ATP-binding proteins (NupA), two transmembrane proteins (NupB and NupC) and a solute-binding protein (BmpA).

The protein localises to the cell membrane. Its function is as follows. Part of an ABC transporter complex involved in the uptake of all common nucleosides. Responsible for energy coupling to the transport system. The sequence is that of Nucleoside import ATP-binding protein NupA from Lactococcus lactis subsp. cremoris (strain MG1363).